The sequence spans 233 residues: Large ribosomal subunit protein uL1 (233 aa).

This sequence belongs to the universal ribosomal protein uL1 family. In terms of assembly, part of the 50S ribosomal subunit.

Its function is as follows. Binds directly to 23S rRNA. The L1 stalk is quite mobile in the ribosome, and is involved in E site tRNA release. Protein L1 is also a translational repressor protein, it controls the translation of the L11 operon by binding to its mRNA. This Finegoldia magna (strain ATCC 29328 / DSM 20472 / WAL 2508) (Peptostreptococcus magnus) protein is Large ribosomal subunit protein uL1.